Here is a 32-residue protein sequence, read N- to C-terminus: Photosystem II reaction center protein T (32 aa).

A helical transmembrane segment spans residues 3 to 23 (AFAYVLILTLAVVTLFFAVAF).

Belongs to the PsbT family. As to quaternary structure, PSII is composed of 1 copy each of membrane proteins PsbA, PsbB, PsbC, PsbD, PsbE, PsbF, PsbH, PsbI, PsbJ, PsbK, PsbL, PsbM, PsbT, PsbX, PsbY, Psb30/Ycf12, peripheral proteins PsbO, CyanoQ (PsbQ), PsbU, PsbV and a large number of cofactors. It forms dimeric complexes.

The protein resides in the cellular thylakoid membrane. Its function is as follows. Found at the monomer-monomer interface of the photosystem II (PS II) dimer, plays a role in assembly and dimerization of PSII. PSII is a light-driven water plastoquinone oxidoreductase, using light energy to abstract electrons from H(2)O, generating a proton gradient subsequently used for ATP formation. In Prochlorococcus marinus (strain MIT 9301), this protein is Photosystem II reaction center protein T.